We begin with the raw amino-acid sequence, 947 residues long: Bifunctional glutamine synthetase adenylyltransferase/adenylyl-removing enzyme (947 aa).

Residues 1 to 440 (MTPLSSPLSQ…VFNELIGDDE (440 aa)) are adenylyl removase. Positions 450-947 (SEPWREVWQD…ASWRKWLVAV (498 aa)) are adenylyl transferase.

Belongs to the GlnE family. The cofactor is Mg(2+).

It carries out the reaction [glutamine synthetase]-O(4)-(5'-adenylyl)-L-tyrosine + phosphate = [glutamine synthetase]-L-tyrosine + ADP. It catalyses the reaction [glutamine synthetase]-L-tyrosine + ATP = [glutamine synthetase]-O(4)-(5'-adenylyl)-L-tyrosine + diphosphate. Involved in the regulation of glutamine synthetase GlnA, a key enzyme in the process to assimilate ammonia. When cellular nitrogen levels are high, the C-terminal adenylyl transferase (AT) inactivates GlnA by covalent transfer of an adenylyl group from ATP to specific tyrosine residue of GlnA, thus reducing its activity. Conversely, when nitrogen levels are low, the N-terminal adenylyl removase (AR) activates GlnA by removing the adenylyl group by phosphorolysis, increasing its activity. The regulatory region of GlnE binds the signal transduction protein PII (GlnB) which indicates the nitrogen status of the cell. This Salmonella gallinarum (strain 287/91 / NCTC 13346) protein is Bifunctional glutamine synthetase adenylyltransferase/adenylyl-removing enzyme.